Reading from the N-terminus, the 162-residue chain is Putative pre-16S rRNA nuclease (162 aa).

This sequence belongs to the YqgF nuclease family.

Its subcellular location is the cytoplasm. In terms of biological role, could be a nuclease involved in processing of the 5'-end of pre-16S rRNA. This chain is Putative pre-16S rRNA nuclease, found in Brucella melitensis biotype 1 (strain ATCC 23456 / CCUG 17765 / NCTC 10094 / 16M).